A 95-amino-acid polypeptide reads, in one-letter code: Signal recognition particle 19 kDa protein (95 aa).

This sequence belongs to the SRP19 family. In terms of assembly, part of the signal recognition particle protein translocation system, which is composed of SRP and FtsY. Archaeal SRP consists of a 7S RNA molecule of 300 nucleotides and two protein subunits: SRP54 and SRP19.

The protein localises to the cytoplasm. Functionally, involved in targeting and insertion of nascent membrane proteins into the cytoplasmic membrane. Binds directly to 7S RNA and mediates binding of the 54 kDa subunit of the SRP. This is Signal recognition particle 19 kDa protein from Staphylothermus marinus (strain ATCC 43588 / DSM 3639 / JCM 9404 / F1).